The following is a 1445-amino-acid chain: Protein HUA2-LIKE 1 (1445 aa).

A PWWP domain is found at 20–77 (LGDLVLAKVKGFPAWPAKIGQPEDWNQAPDPKKHFVQFYGTGEIGFVTPPDIQPFTSE). Disordered regions lie at residues 133–197 (KYLN…SPDP), 211–302 (TCTD…DLNI), 319–356 (FENE…SKRL), 409–439 (EHTS…SDSD), 460–491 (DDDD…ANAS), 641–685 (GIPK…TSTP), and 797–835 (LTPS…SLSG). Composition is skewed to polar residues over residues 173 to 187 (QDSS…SPSS) and 211 to 225 (TCTD…NLVN). Basic and acidic residues-rich tracts occupy residues 228–257 (RIIR…RAAT), 274–293 (GQDH…ESSD), and 331–350 (DESK…DQKQ). Composition is skewed to polar residues over residues 660–673 (RVSS…NQRS) and 797–814 (LTPS…QAGT). The CID domain occupies 838–979 (EAAISRDTFE…RYIGDLGASG (142 aa)). Residues 1110–1203 (PATTCATELP…SLPLQPGFAP (94 aa)) form a disordered region. The segment covering 1124-1170 (GSPPLPHESPPSPPPQPPSSPPPPSSPPQLAPAPPPSDHCLPPPTAP) has biased composition (pro residues).

In terms of tissue distribution, expressed throughout young primordia, and vegetative and reproductive apices.

It is found in the nucleus. Its function is as follows. Probable transcription factor that acts with partial redundancy with HULK2 and HULK3. Plays diverse and essential roles in the control of plant development, physiology and flowering time. The polypeptide is Protein HUA2-LIKE 1 (Arabidopsis thaliana (Mouse-ear cress)).